A 282-amino-acid chain; its full sequence is Bifunctional protein FolD (282 aa).

Residues 165–167 (GRS), Ser190, and Thr231 each bind NADP(+).

It belongs to the tetrahydrofolate dehydrogenase/cyclohydrolase family. Homodimer.

The enzyme catalyses (6R)-5,10-methylene-5,6,7,8-tetrahydrofolate + NADP(+) = (6R)-5,10-methenyltetrahydrofolate + NADPH. It carries out the reaction (6R)-5,10-methenyltetrahydrofolate + H2O = (6R)-10-formyltetrahydrofolate + H(+). The protein operates within one-carbon metabolism; tetrahydrofolate interconversion. Its function is as follows. Catalyzes the oxidation of 5,10-methylenetetrahydrofolate to 5,10-methenyltetrahydrofolate and then the hydrolysis of 5,10-methenyltetrahydrofolate to 10-formyltetrahydrofolate. This chain is Bifunctional protein FolD, found in Clostridium botulinum (strain Alaska E43 / Type E3).